An 820-amino-acid chain; its full sequence is DNA mismatch repair protein MutS (820 aa).

Residue 618–625 participates in ATP binding; it reads GPNMAGKS.

Belongs to the DNA mismatch repair MutS family.

This protein is involved in the repair of mismatches in DNA. It is possible that it carries out the mismatch recognition step. This protein has a weak ATPase activity. The sequence is that of DNA mismatch repair protein MutS from Chlamydia trachomatis serovar A (strain ATCC VR-571B / DSM 19440 / HAR-13).